The primary structure comprises 246 residues: Orotidine 5'-phosphate decarboxylase (246 aa).

Residues D22, K44, 71–80, T131, R192, Q201, G221, and R222 each bind substrate; that span reads DLKFHDIPNT. Catalysis depends on K73, which acts as the Proton donor.

It belongs to the OMP decarboxylase family. Type 1 subfamily. Homodimer.

The enzyme catalyses orotidine 5'-phosphate + H(+) = UMP + CO2. It participates in pyrimidine metabolism; UMP biosynthesis via de novo pathway; UMP from orotate: step 2/2. Catalyzes the decarboxylation of orotidine 5'-monophosphate (OMP) to uridine 5'-monophosphate (UMP). This Yersinia enterocolitica serotype O:8 / biotype 1B (strain NCTC 13174 / 8081) protein is Orotidine 5'-phosphate decarboxylase.